Consider the following 480-residue polypeptide: Porphobilinogen deaminase, chloroplastic (480 aa).

The N-terminal 139 residues, 1-139 (MYCGRYETIG…VSGGRIWSLA (139 aa)), are a transit peptide targeting the chloroplast. The residue at position 395 (Cys-395) is an S-(dipyrrolylmethanemethyl)cysteine.

This sequence belongs to the HMBS family. Requires dipyrromethane as cofactor.

Its subcellular location is the plastid. It is found in the chloroplast. The enzyme catalyses 4 porphobilinogen + H2O = hydroxymethylbilane + 4 NH4(+). It participates in porphyrin-containing compound metabolism; protoporphyrin-IX biosynthesis; coproporphyrinogen-III from 5-aminolevulinate: step 2/4. Its pathway is porphyrin-containing compound metabolism; chlorophyll biosynthesis. Functionally, tetrapolymerization of the monopyrrole PBG into the hydroxymethylbilane pre-uroporphyrinogen in several discrete steps. This is Porphobilinogen deaminase, chloroplastic from Euglena gracilis.